Consider the following 314-residue polypeptide: DegV domain-containing protein XAC3508 (314 aa).

The DegV domain occupies Ile3–Ala307. Hexadecanoate contacts are provided by Thr63 and Ser96.

May bind long-chain fatty acids, such as palmitate, and may play a role in lipid transport or fatty acid metabolism. The protein is DegV domain-containing protein XAC3508 of Xanthomonas axonopodis pv. citri (strain 306).